The primary structure comprises 452 residues: Ribosomal L1 domain-containing protein 1 (452 aa).

Met-1 bears the N-acetylmethionine mark. Glycyl lysine isopeptide (Lys-Gly) (interchain with G-Cter in SUMO2) cross-links involve residues Lys-119 and Lys-253. Residues 277-350 adopt a coiled-coil conformation; the sequence is LRSLRKQELK…QKVTEECEEA (74 aa). Positions 283–452 are disordered; the sequence is QELKKRKREN…DKKTKAAHSN (170 aa). Residues 292–301 show a composition bias toward basic and acidic residues; sequence NAKLKKESKM. Residues 309–319 are compositionally biased toward polar residues; it reads ATSLLTQSGLA. Residues 330–341 are compositionally biased toward basic residues; it reads QKKKTNKAHKKQ. 5 positions are modified to phosphothreonine: Thr-334, Thr-344, Thr-360, Thr-399, and Thr-407. Residues 414-423 show a composition bias toward basic and acidic residues; it reads KDVQEFRKPE. The segment covering 425-440 has biased composition (polar residues); it reads SSFSTPRKSGKKASNT. Residue Thr-429 is modified to Phosphothreonine. Lys-432 bears the N6-acetyllysine mark. Ser-433 carries the post-translational modification Phosphoserine.

This sequence belongs to the universal ribosomal protein uL1 family. Highly divergent. In terms of assembly, interacts with ING1. Interacts with KPNA7 and KPNA2.

It localises to the nucleus. The protein resides in the nucleolus. Functionally, regulates cellular senescence through inhibition of PTEN translation. Acts as a pro-apoptotic regulator in response to DNA damage. The chain is Ribosomal L1 domain-containing protein 1 from Mus musculus (Mouse).